The following is a 430-amino-acid chain: Serine--tRNA ligase (430 aa).

Position 235–237 (235–237 (TSE)) interacts with L-serine. 266–268 (RSE) is an ATP binding site. Glutamate 289 contributes to the L-serine binding site. An ATP-binding site is contributed by 353–356 (EISS). Serine 388 provides a ligand contact to L-serine.

This sequence belongs to the class-II aminoacyl-tRNA synthetase family. Type-1 seryl-tRNA synthetase subfamily. Homodimer. The tRNA molecule binds across the dimer.

It is found in the cytoplasm. It carries out the reaction tRNA(Ser) + L-serine + ATP = L-seryl-tRNA(Ser) + AMP + diphosphate + H(+). The catalysed reaction is tRNA(Sec) + L-serine + ATP = L-seryl-tRNA(Sec) + AMP + diphosphate + H(+). It functions in the pathway aminoacyl-tRNA biosynthesis; selenocysteinyl-tRNA(Sec) biosynthesis; L-seryl-tRNA(Sec) from L-serine and tRNA(Sec): step 1/1. Functionally, catalyzes the attachment of serine to tRNA(Ser). Is also able to aminoacylate tRNA(Sec) with serine, to form the misacylated tRNA L-seryl-tRNA(Sec), which will be further converted into selenocysteinyl-tRNA(Sec). This Azoarcus sp. (strain BH72) protein is Serine--tRNA ligase.